We begin with the raw amino-acid sequence, 111 residues long: Large ribosomal subunit protein P2 (111 aa).

The segment at 62-111 (LASVPSGGAGGAAAAGGAAAAGGAAEAAPEEAKEEEKEESDDDMGFGLFD) is disordered. Over residues 76–88 (AGGAAAAGGAAEA) the composition is skewed to low complexity. The residue at position 101 (S101) is a Phosphoserine.

This sequence belongs to the eukaryotic ribosomal protein P1/P2 family. P1 and P2 exist as dimers at the large ribosomal subunit.

Functionally, plays an important role in the elongation step of protein synthesis. This chain is Large ribosomal subunit protein P2, found in Podospora anserina (Pleurage anserina).